The sequence spans 523 residues: DELLA protein RGL3 (523 aa).

Residues 1-28 (MKRSHQETSVEEEAPSMVEKLENGCGGG) are disordered. Positions 34–38 (DEFLA) match the DELLA motif motif. The LEXLE motif motif lies at 56–60 (LEQLE). The VHYNP motif motif lies at 78–82 (VHYNP). The GRAS domain occupies 148 to 516 (VLIEETGVRL…KPLIAASAWK (369 aa)). Positions 155-209 (VRLVQALVACAEAVQLENLSLADALVKRVGLLAASQAGAMGKVATYFAEALARRI) are leucine repeat I (LRI). The segment at 228–293 (QMNFYDSCPY…GGPPSFRLTG (66 aa)) is VHIID. A VHIID motif is present at residues 259-263 (VHVID). The segment at 305 to 337 (ELGWKLAQLAQAIGVEFKFNGLTTERLSDLEPD) is leucine repeat II (LRII). A PFYRE region spans residues 348-437 (LVVNSVFELH…EVYLGRQILN (90 aa)). Residues 356–360 (LHPVL) carry the LXXLL motif motif. The tract at residues 440–516 (ATEGSDRIER…KPLIAASAWK (77 aa)) is SAW.

The protein belongs to the GRAS family. DELLA subfamily. Interacts directly with the GID2/SLY1 component of the SCF(GID2) complex, suggesting that it may be ubiquitinated. Interacts (via N-terminus) with GID1A, GID1B and GID1B (via N-terminus). Interacts with the BOI proteins BOI, BRG1, BRG2 and BRG3. Phosphorylated. In terms of processing, may be ubiquitinated. Expressed at very low level. Mainly expressed in germinating seeds and flowers and siliques. Not expressed in other tissues.

It is found in the nucleus. Its function is as follows. Probable transcriptional regulator that acts as a repressor of the gibberellin (GA) signaling pathway. No effect of the BOI proteins on its stability. Probably acts by participating in large multiprotein complexes that repress transcription of GA-inducible genes. Its activity may be regulated by phytohormones such as auxin and ethylene. The polypeptide is DELLA protein RGL3 (RGL3) (Arabidopsis thaliana (Mouse-ear cress)).